A 265-amino-acid polypeptide reads, in one-letter code: Protein Msed_2121 (265 aa).

Belongs to the CinA family.

The polypeptide is Protein Msed_2121 (Metallosphaera sedula (strain ATCC 51363 / DSM 5348 / JCM 9185 / NBRC 15509 / TH2)).